The following is a 1515-amino-acid chain: Homeobox protein cut-like 1 (1515 aa).

A coiled-coil region spans residues 56–361 (LLKSFQGEID…VKKELNTLKS (306 aa)). Over residues 393 to 405 (ENATLRISNSDLS) the composition is skewed to polar residues. Disordered regions lie at residues 393–453 (ENAT…SPAG), 509–546 (PYST…ISEG), 644–666 (PKRR…TGSD), and 680–702 (LQVQ…NSDD). Over residues 422–432 (GPLPASPPPQL) the composition is skewed to pro residues. Phosphoserine is present on Ser427. Over residues 436 to 447 (TGEQVSNTNGTH) the composition is skewed to polar residues. Over residues 514–544 (SISSPSPLQQSPDVNGMAPSPSQSESAGSIS) the composition is skewed to low complexity. A DNA-binding region (CUT 1) is located at residues 540 to 627 (AGSISEGEEI…ILALRSIQGR (88 aa)). Residue Ser761 is modified to Phosphoserine. Disordered stretches follow at residues 769-871 (PETS…SASA) and 884-923 (YSQS…PSVP). Glycyl lysine isopeptide (Lys-Gly) (interchain with G-Cter in SUMO2) cross-links involve residues Lys783, Lys809, and Lys840. A compositionally biased stretch (basic and acidic residues) spans 828–852 (PERRNLTSSEETKADETTASGKERA). Composition is skewed to polar residues over residues 853–868 (GSSQ…QGPS) and 884–906 (YSQS…NSPL). Ser904 carries the phosphoserine modification. A DNA-binding region (CUT 2) is located at residues 929-1016 (QYEVYMYQEV…QGVLPVQGQQ (88 aa)). A compositionally biased stretch (polar residues) spans 1032-1044 (QQGCVSSESTPKT). Residues 1032 to 1105 (QQGCVSSEST…QPTTPLPLSG (74 aa)) are disordered. Low complexity predominate over residues 1045–1061 (SASCSPAPESPMSSSES). A phosphoserine mark is found at Ser1054 and Ser1064. Residues 1112-1199 (QELVAMSPEL…VEKLMDMKRM (88 aa)) constitute a DNA-binding region (CUT 3). Residues 1207 to 1242 (RRHSSVSDSQPCEPPSVGIDYSQGASPQPQHQLKKP) are disordered. The segment at residues 1239–1298 (LKKPRVVLAPEEKEALKRAYQQKPYPSPKTIEELATQLNLKTSTVINWFHNYRSRIRREL) is a DNA-binding region (homeobox). At Ser1265 the chain carries Phosphoserine. A Glycyl lysine isopeptide (Lys-Gly) (interchain with G-Cter in SUMO2) cross-link involves residue Lys1279. The interval 1307-1488 (SQGQAGASDS…AGARDNPVRK (182 aa)) is disordered. A compositionally biased stretch (low complexity) spans 1313-1328 (ASDSPSARSSRAAPSS). The span at 1331 to 1343 (DSCDGVEATDAEE) shows a compositional bias: acidic residues. Ser1332 carries the phosphoserine modification. Basic and acidic residues predominate over residues 1365–1378 (ADREEATQPAEKAK). Residues 1406–1468 (ADAPAPVPSL…ANAPARRPSS (63 aa)) are compositionally biased toward low complexity. Residues Ser1468, Ser1496, and Ser1506 each carry the phosphoserine modification.

Belongs to the CUT homeobox family. As to quaternary structure, interacts with BANP. Interacts with SATB1 (via DNA-binding domains); the interaction inhibits the attachment of both proteins to DNA. In terms of processing, phosphorylated by PKA. As cells progress into S phase, a fraction of CUX1 molecules is proteolytically processed into N-terminally truncated proteins of 110 kDa by CTSL. Cell cycle-dependent processing of CUX1 serves to generate a CDP/Cux p110 with distinct DNA binding and transcriptional properties. In terms of tissue distribution, testis-specific where it is expressed in germ cells.

It localises to the nucleus. Transcription factor involved in the control of neuronal differentiation in the brain. Regulates dendrite development and branching, and dendritic spine formation in cortical layers II-III. Also involved in the control of synaptogenesis. In addition, it has probably a broad role in mammalian development as a repressor of developmentally regulated gene expression. May act by preventing binding of positively-activing CCAAT factors to promoters. Component of nf-munr repressor; binds to the matrix attachment regions (MARs) (5' and 3') of the immunoglobulin heavy chain enhancer. Represses T-cell receptor (TCR) beta enhancer function by binding to MARbeta, an ATC-rich DNA sequence located upstream of the TCR beta enhancer. Binds to the TH enhancer; may require the basic helix-loop-helix protein TCF4 as a coactivator. Its function is as follows. Plays a role in cell cycle progression, in particular at the G1/S transition. As cells progress into S phase, a fraction of CUX1 molecules is proteolytically processed into N-terminally truncated proteins of 110 kDa. While CUX1 only transiently binds to DNA and carries the CCAAT-displacement activity, CDP/Cux p110 makes a stable interaction with DNA and stimulates expression of genes such as POLA1. The polypeptide is Homeobox protein cut-like 1 (Mus musculus (Mouse)).